A 224-amino-acid chain; its full sequence is Ribose-5-phosphate isomerase A (224 aa).

Substrate is bound by residues 32-35 (TGST), 85-88 (DGAD), and 98-101 (KGGG). E107 serves as the catalytic Proton acceptor. K125 serves as a coordination point for substrate.

It belongs to the ribose 5-phosphate isomerase family. As to quaternary structure, homodimer.

It carries out the reaction aldehydo-D-ribose 5-phosphate = D-ribulose 5-phosphate. Its pathway is carbohydrate degradation; pentose phosphate pathway; D-ribose 5-phosphate from D-ribulose 5-phosphate (non-oxidative stage): step 1/1. Catalyzes the reversible conversion of ribose-5-phosphate to ribulose 5-phosphate. In Pseudomonas putida (strain GB-1), this protein is Ribose-5-phosphate isomerase A.